A 468-amino-acid polypeptide reads, in one-letter code: Alcohol dehydrogenase (quinone), cytochrome c subunit (468 aa).

Positions 1–23 (MINRLKVTFSAAAFSLLAGTALA) are cleaved as a signal peptide. Cytochrome c domains are found at residues 31 to 134 (ALVQ…MHGV), 178 to 293 (PEIA…KSLP), and 317 to 407 (TASV…RTSW). Residues Cys-45, Cys-48, His-49, Cys-193, Cys-196, His-197, Cys-330, Cys-333, and His-334 each contribute to the heme c site.

In terms of assembly, the alcohol dehydrogenase multicomponent enzyme system is composed of a dehydrogenase subunit I (AdhA) and a cytochrome c subunit II (AdhB). Heme c is required as a cofactor.

The protein localises to the cell membrane. It carries out the reaction ethanol + a ubiquinone = a ubiquinol + acetaldehyde. Its function is as follows. Cytochrome c component of the alcohol dehydrogenase multicomponent enzyme system which is involved in the production of acetic acid and in the ethanol oxidase respiratory chain. Quinohemoprotein alcohol dehydrogenase (ADH) catalyzes the oxidation of ethanol to acetaldehyde by transferring electrons to the ubiquinone embedded in the membrane phospholipids. The electrons transfer from ethanol to membranous ubiquinone occurs from pyrroloquinoline quinone (PQQ) to one heme c in subunit I (AdhA), and finally to two heme c in subunit II (AdhB). Besides ubiquinone reduction, ADH also has a ubiquinol (QH2) oxidation reaction which mediates electron transfer from ubiquinol to the non-energy generating bypass oxidase system. The electrons transfer occurs from ubiquinol (QH2) to the additional heme c within subunit II (AdhB). This chain is Alcohol dehydrogenase (quinone), cytochrome c subunit, found in Gluconacetobacter polyoxogenes (Acetobacter polyoxogenes).